An 860-amino-acid chain; its full sequence is DNA mismatch repair protein MutS (860 aa).

Position 618 to 625 (618 to 625) interacts with ATP; the sequence is GPNMGGKS.

This sequence belongs to the DNA mismatch repair MutS family.

This protein is involved in the repair of mismatches in DNA. It is possible that it carries out the mismatch recognition step. This protein has a weak ATPase activity. This Hahella chejuensis (strain KCTC 2396) protein is DNA mismatch repair protein MutS.